We begin with the raw amino-acid sequence, 398 residues long: Dihydrolipoyllysine-residue acetyltransferase component of acetoin cleaving system (398 aa).

The Lipoyl-binding domain maps to 2 to 77 (AVKVVMPKLG…PPGTAICYIG (76 aa)). N6-lipoyllysine is present on lysine 43. Positions 118 to 155 (KISPVARKIAEKAGLDLKQLKGTGPGGRIVKDDVTKAL) constitute a Peripheral subunit-binding (PSBD) domain. Residues histidine 371 and aspartate 375 contribute to the active site.

It belongs to the 2-oxoacid dehydrogenase family. (R)-lipoate serves as cofactor.

It carries out the reaction N(6)-[(R)-dihydrolipoyl]-L-lysyl-[protein] + acetyl-CoA = N(6)-[(R)-S(8)-acetyldihydrolipoyl]-L-lysyl-[protein] + CoA. The protein operates within ketone degradation; acetoin degradation. The polypeptide is Dihydrolipoyllysine-residue acetyltransferase component of acetoin cleaving system (acoC) (Bacillus subtilis (strain 168)).